The primary structure comprises 225 residues: MAEEPTYTTEQVDELIHAGLGTVDFFLSRPIDAQSSLGKGSIPPGVTAVLTSAAEAKSKPVAAGPVKPRRKKVISNTTPYTIADNIPPEKLPINTPIPNPLLPLARPHGKMTDIDIVTGNITEGSYKGVELAKLGKQTLLTRFTSNEPVSSAGSAQDPNFKRGGANRERARGNHRREWSIAWVGDQVKVFEWCNPRCAPVTASARKFTCTCGSCPSICGECEGDH.

The interval 65-72 (PVKPRRKK) is nuclear localization signal. The span at 145–157 (SNEPVSSAGSAQD) shows a compositional bias: polar residues. The interval 145–173 (SNEPVSSAGSAQDPNFKRGGANRERARGN) is disordered. Zn(2+) is bound by residues histidine 174, cysteine 193, cysteine 197, cysteine 209, cysteine 211, cysteine 214, cysteine 218, and cysteine 221.

Belongs to the paramyxoviruses V protein family. As to quaternary structure, interacts with host IFIH1/MDA5 and DHX58/LGP2. Forms with host DDB1, CUL4A, STAT1 and STAT2 the HPIV2 virus V-dependent complex (VDC); this complex targets host STAT2 to proteasomal degradation.

It is found in the host nucleus. Its function is as follows. Plays an essential role in the inhibition of host immune response. Prevents the establishment of cellular antiviral state by blocking interferon-alpha/beta (IFN-alpha/beta) production and signaling pathway. Interacts with host IFIH1/MDA5 and DHX58/LGP2 to inhibit the transduction pathway involved in the activation of IFN-beta promoter, thus protecting the virus against cell antiviral state. Efficiently blocks type I IFN signaling following infection by targeting host STAT2 for proteasomal degradation. Also plays a role in viral growth by promoting host RhoA-induced F-actin formation. The chain is Non-structural protein V (P/V) from Homo sapiens (Human).